The following is a 575-amino-acid chain: Delta-selinene-like synthase, chloroplastic (575 aa).

5 residues coordinate (2E,6E)-farnesyl diphosphate: R288, D325, D329, R466, and D469. D325 and D329 together coordinate Mg(2+). A DDXXD motif motif is present at residues 325–329 (DDLYD). 2 residues coordinate Mg(2+): D469 and E477.

The protein belongs to the terpene synthase family. Tpsb subfamily. In terms of assembly, monomer. It depends on Mg(2+) as a cofactor. Mn(2+) is required as a cofactor.

Its subcellular location is the plastid. The protein resides in the chloroplast. The catalysed reaction is (2E,6E)-farnesyl diphosphate = (+)-delta-selinene + diphosphate. It participates in secondary metabolite biosynthesis; terpenoid biosynthesis. It functions in the pathway terpene metabolism; oleoresin biosynthesis. In terms of biological role, sesquiterpene synthase (sesqui-TPS) involved in the biosynthesis of sesquiterpene natural products. Catalyzes the conversion of (2E)-geranyl diphosphate (GPP) into delta-selinene. This chain is Delta-selinene-like synthase, chloroplastic, found in Picea sitchensis (Sitka spruce).